We begin with the raw amino-acid sequence, 680 residues long: Dipeptidyl carboxypeptidase (680 aa).

H469 serves as a coordination point for Zn(2+). Residue E470 is part of the active site. Residues H473 and H476 each coordinate Zn(2+).

Belongs to the peptidase M3 family. Zn(2+) serves as cofactor.

The protein resides in the cytoplasm. The catalysed reaction is Hydrolysis of unblocked, C-terminal dipeptides from oligopeptides, with broad specificity. Does not hydrolyze bonds in which P1' is Pro, or both P1 and P1' are Gly.. Removes dipeptides from the C-termini of N-blocked tripeptides, tetrapeptides and larger peptides. The polypeptide is Dipeptidyl carboxypeptidase (dcp) (Salmonella typhimurium (strain LT2 / SGSC1412 / ATCC 700720)).